The chain runs to 423 residues: MFYTCGPNEAMVVSGFCRSPPVMISGGSVFVFPCVQQIQRISLNTLTLNVKSDKVYTRHGVPVSVTGIAQMKIQGQNKQMLAAKCQMFLGKSESDIAHIALETLEGHQRAIIAHLTVEEIYKDRKKFSEQVFKVASSDLFNMGISVVSYTLKDVHDDQDYLHSLGKARTAQVQKDARIGEAKNKRDAVIREANAIQEKVSAQYMNEIEMAKAQRDYELKKAVYDIEVCTKKAESEMAYQLQVAKTKQQIEEEKMQVMVVERSQQIMLQEQEIARKEKELEAQVMKPADAERYRLEKLAEAERLQLIMEAEAEAESIKMRGEAEAYAVEARGRAEAEQMAKKAEAFQTYKEGAMVDMLMEKLPLIAEEISKPLSATNKVTMVSSGGSEIGAAKLTGEVLDIMTKLPETIEKLTGVSISQVARTG.

This sequence belongs to the band 7/mec-2 family. Flotillin subfamily. In terms of assembly, heterooligomeric complex of flotillin-1 and flotillin-2 and caveolin-1 and caveolin-2. As to expression, normally expressed in growing retinal exons of newly differentiated ganglion cells at the retinal margin. After optic nerve injury, expressed in all retinal ganglion cells and retinal axons. Also expressed in endothelial cells, spinal cord, larval and adult skin, muscle processes, thymus and gill macrophages.

It localises to the cell membrane. It is found in the endosome. The protein localises to the membrane. Its subcellular location is the caveola. The protein resides in the melanosome. It localises to the membrane raft. Its function is as follows. May act as a scaffolding protein within caveolar membranes, functionally participating in formation of caveolae or caveolae-like vesicles. The protein is Flotillin-1 (flot1) of Carassius auratus (Goldfish).